A 539-amino-acid polypeptide reads, in one-letter code: MRFDPEKIKKDAKENFDLTWNEGKKMVKTPTLNERYPRTTFRYGKAHPVYDTIQKLREAYLRMGFEEMMNPLIVDEKEVHKQFGSEALAVLDRCFYLAGLPRPNVGISDERIAQINGILGDIGDEGIDKVRKVLHAYKKGKVEGDDLVPEISAALEVSDALVADMIEKVFPEFKELVAQASTKTLRSHMTSGWFISLGALLERKEPPFHFFSIDRCFRREQQEDASRLMTYYSASCVIMDENVTVDHGKAVAEGLLSQFGFEKFLFRPDEKRSKYYVPDTQTEVFAFHPKLVGSNSKYSDGWIEIATFGIYSPTALAEYDIPCPVMNLGLGVERLAMILHDAPDIRSLTYPQIPQYSEWEMSDSELAKQVFVDKTPETPEGREIADAVVAQCELHGEEPSPCEFPAWEGEVCGRKVKVSVIEPEENTKLCGPAAFNEVVTYQGDILGIPNTKKWQKAFENHSAMAGIRFIEAFAAQAAREIEEAAMSGADEHIVRVRIVKVPSEVNIKIGATAQRYITGKNKKIDMRGPIFTSAKAEFE.

Substrate-binding positions include 188-190 (HMT), 233-235 (SAS), 275-276 (YY), and N327.

This sequence belongs to the class-II aminoacyl-tRNA synthetase family. O-phosphoseryl-tRNA(Cys) synthetase subfamily. As to quaternary structure, homotetramer. Interacts with SepCysS.

The catalysed reaction is tRNA(Cys) + O-phospho-L-serine + ATP = O-phospho-L-seryl-tRNA(Cys) + AMP + diphosphate. Catalyzes the attachment of O-phosphoserine (Sep) to tRNA(Cys). This Methanosarcina acetivorans (strain ATCC 35395 / DSM 2834 / JCM 12185 / C2A) protein is O-phosphoserine--tRNA(Cys) ligase.